Consider the following 579-residue polypeptide: Ribonucleoside-diphosphate reductase small chain (579 aa).

Asp-130, Glu-160, and His-163 together coordinate Fe cation. Residue Tyr-167 is part of the active site. The Fe cation site is built by Glu-225, Glu-258, and His-261. Residues 435–579 (DMTWTLKDVH…VSVFVDQFYR (145 aa)) form the Fido domain.

It belongs to the ribonucleoside diphosphate reductase small chain family. Heterotetramer composed of a homodimer of the large subunit (R1) and a homodimer of the small subunit (R2). Larger multisubunit protein complex are also active, composed of (R1)n(R2)n. Fe cation serves as cofactor.

The catalysed reaction is a 2'-deoxyribonucleoside 5'-diphosphate + [thioredoxin]-disulfide + H2O = a ribonucleoside 5'-diphosphate + [thioredoxin]-dithiol. In terms of biological role, ribonucleoside-diphosphate reductase holoenzyme provides the precursors necessary for viral DNA synthesis. Allows virus growth in non-dividing cells. Catalyzes the biosynthesis of deoxyribonucleotides from the corresponding ribonucleotides. This is Ribonucleoside-diphosphate reductase small chain from Magallana gigas (Pacific oyster).